The following is a 122-amino-acid chain: Large ribosomal subunit protein uL14 (122 aa).

Belongs to the universal ribosomal protein uL14 family. As to quaternary structure, part of the 50S ribosomal subunit. Forms a cluster with proteins L3 and L19. In the 70S ribosome, L14 and L19 interact and together make contacts with the 16S rRNA in bridges B5 and B8.

Binds to 23S rRNA. Forms part of two intersubunit bridges in the 70S ribosome. This Helicobacter hepaticus (strain ATCC 51449 / 3B1) protein is Large ribosomal subunit protein uL14.